We begin with the raw amino-acid sequence, 608 residues long: Nuclear protein localization protein 4 homolog (608 aa).

The residue at position 2 (alanine 2) is an N-acetylalanine. Lysine 179 carries the N6-acetyllysine modification. The MPN domain occupies 226–363 (IMFENHTVAD…ICRLSPDGHF (138 aa)). The RanBP2-type zinc-finger motif lies at 580–608 (TSAMWACQHCTFMNQPGTGHCEMCSLPRT).

Belongs to the NPL4 family. As to quaternary structure, heterodimer with UFD1. The heterodimer binds ubiquitinated proteins. The heterodimer binds to VCP and inhibits Golgi membrane fusion. Interacts with ZFAND2B; probably through VCP.

Its subcellular location is the cytoplasm. The protein resides in the cytosol. It localises to the endoplasmic reticulum. The protein localises to the nucleus. It functions in the pathway protein degradation; proteasomal ubiquitin-dependent pathway. The ternary complex containing UFD1, VCP and NPLOC4 binds ubiquitinated proteins and is necessary for the export of misfolded proteins from the ER to the cytoplasm, where they are degraded by the proteasome. The NPLOC4-UFD1-VCP complex regulates spindle disassembly at the end of mitosis and is necessary for the formation of a closed nuclear envelope. Acts as a negative regulator of type I interferon production via the complex formed with VCP and UFD1, which binds to RIGI and recruits RNF125 to promote ubiquitination and degradation of RIGI. The polypeptide is Nuclear protein localization protein 4 homolog (Nploc4) (Rattus norvegicus (Rat)).